A 223-amino-acid polypeptide reads, in one-letter code: Probable transaldolase (223 aa).

Lysine 83 functions as the Schiff-base intermediate with substrate in the catalytic mechanism.

It belongs to the transaldolase family. Type 3B subfamily.

It localises to the cytoplasm. It catalyses the reaction D-sedoheptulose 7-phosphate + D-glyceraldehyde 3-phosphate = D-erythrose 4-phosphate + beta-D-fructose 6-phosphate. It functions in the pathway carbohydrate degradation; pentose phosphate pathway; D-glyceraldehyde 3-phosphate and beta-D-fructose 6-phosphate from D-ribose 5-phosphate and D-xylulose 5-phosphate (non-oxidative stage): step 2/3. Its function is as follows. Transaldolase is important for the balance of metabolites in the pentose-phosphate pathway. The protein is Probable transaldolase of Myxococcus xanthus (strain DK1622).